A 389-amino-acid polypeptide reads, in one-letter code: MKRLLSTLLIGIMLLTFAPSAFAKQDGKRTSELAHEAKSAVLIERDTGKVLYNKNSNERLAPASMTKIMTMLLIMEALDKGKIKMSDKVRTSEHAASMGGSQIFLEPGEEMTVKEMLKGIAIASGNDASVAMAEFISGSEEEFVKKMNKKAKELGLKNTSFKNPTGLTEEGHYSSAYDMAIMAKELLKYESITKFTGTYEDYLRENTDKKFWLVNTNRLIKFYPGVDGVKTGYTGEAKYCLTASAKKGNMRAIAVVFGASTPKERNAQVTKMLDFAFSQYETHPLYKRNQTVAKVKVKKGKQKFIELTTSEPISILTKKGEDMNDVKKEIKMKDNISAPIQKGQELGTLVLKKDGEVLAESPVAAKEDMKKAGFITFLKRTMGDWTKFK.

The N-terminal stretch at 1-23 (MKRLLSTLLIGIMLLTFAPSAFA) is a signal peptide. Ser64 (acyl-ester intermediate) is an active-site residue. The Proton acceptor role is filled by Lys67. The active site involves Ser124. Residue Lys230 participates in substrate binding.

The protein belongs to the peptidase S11 family.

Its subcellular location is the secreted. The enzyme catalyses Preferential cleavage: (Ac)2-L-Lys-D-Ala-|-D-Ala. Also transpeptidation of peptidyl-alanyl moieties that are N-acyl substituents of D-alanine.. It participates in cell wall biogenesis; peptidoglycan biosynthesis. Functionally, removes C-terminal D-alanyl residues from sugar-peptide cell wall precursors. This Bacillus subtilis (strain 168) protein is D-alanyl-D-alanine carboxypeptidase DacF (dacF).